The chain runs to 216 residues: 2',3'-cyclic-nucleotide 3'-phosphodiesterase (216 aa).

Histidine 39 (proton donor/acceptor) is an active-site residue. A substrate-binding site is contributed by threonine 41. Residue histidine 137 is the Proton donor/acceptor of the active site. Substrate-binding residues include serine 139 and tyrosine 142.

Belongs to the 2H phosphoesterase superfamily. CPD1 family.

It localises to the golgi apparatus. It catalyses the reaction a nucleoside 2',3'-cyclic phosphate + H2O = a nucleoside 2'-phosphate + H(+). In terms of biological role, involved in the metabolism of ADP-ribose 1',2'-cyclic phosphate which is produced as a consequence of tRNA splicing. The sequence is that of 2',3'-cyclic-nucleotide 3'-phosphodiesterase (CPD1) from Eremothecium gossypii (strain ATCC 10895 / CBS 109.51 / FGSC 9923 / NRRL Y-1056) (Yeast).